We begin with the raw amino-acid sequence, 758 residues long: Polyribonucleotide nucleotidyltransferase (758 aa).

The Mg(2+) site is built by D482 and D488. In terms of domain architecture, KH spans 549-608 (PRVLSFYIDKDKISAAIGTKGKNIRSVCERSNAKIEIGDDGKVSVFAISSTEAEAAKNMM). Positions 618–686 (GSIIDAKVVK…KGGCPKLSRR (69 aa)) constitute an S1 motif domain. Residues 707–758 (DGLNNRDNYYNNSFNKKPEDNYHSNRPTRPRSGFSNRSRPKFGNNDSSSGFY) form a disordered region. Positions 711 to 721 (NRDNYYNNSFN) are enriched in low complexity.

Belongs to the polyribonucleotide nucleotidyltransferase family. Mg(2+) is required as a cofactor.

Its subcellular location is the cytoplasm. The enzyme catalyses RNA(n+1) + phosphate = RNA(n) + a ribonucleoside 5'-diphosphate. Functionally, involved in mRNA degradation. Catalyzes the phosphorolysis of single-stranded polyribonucleotides processively in the 3'- to 5'-direction. This chain is Polyribonucleotide nucleotidyltransferase, found in Wolbachia pipientis subsp. Culex pipiens (strain wPip).